A 177-amino-acid chain; its full sequence is SAYSvFN domain-containing protein 1 (177 aa).

The Cytoplasmic segment spans residues 1-100 (MADFQEQLRQ…CLKYTLWTVY (100 aa)). Residues 57–70 (SENSQDEAVTSSES) are compositionally biased toward polar residues. Residues 57 to 85 (SENSQDEAVTSSESELVPEEQPTRSTDHH) are disordered. Residues 101 to 121 (LLFWITLYVIAIKLSFGLVFL) constitute an intramembrane region (helical). The Cytoplasmic segment spans residues 122 to 177 (MFSALFGIYFNTRTEPKKRNEMSAYSVFNKNCESIDGTLKAEQFEREIRYGSGSVR).

The protein belongs to the SAYSD1 family.

Its subcellular location is the endoplasmic reticulum membrane. Its function is as follows. Ufmylation 'reader' component of a translocation-associated quality control pathway, a mechanism that takes place when a ribosome has stalled during translation, and which is required to degrade clogged substrates. Specifically recognizes and binds ufmylated ribosomes when a ribosome has stalled, promoting the transport of stalled nascent chain to lysosomes for degradation. The protein is SAYSvFN domain-containing protein 1 of Drosophila melanogaster (Fruit fly).